The primary structure comprises 59 residues: Conorfamide-Vc1 (59 aa).

The N-terminal stretch at 1–19 is a signal peptide; that stretch reads MSGRGFLLLALLLLVTVEA. A propeptide spanning residues 20-25 is cleaved from the precursor; it reads TKVEKK. The interval 32–39 is positively charged region crucial for activity against MRGPRX1 receptors; sequence AWSGPRNR. Phe43 carries the post-translational modification Phenylalanine amide. A propeptide spanning residues 45–59 is cleaved from the precursor; sequence RRDMQSPLLSERLRL.

This sequence belongs to the FARP (FMRFamide related peptide) family. In terms of tissue distribution, expressed by the venom duct.

The protein resides in the secreted. In terms of biological role, this peptide activates human and mouse sensory neuron-specific G-protein coupled receptors MRGPRX1. The activity on human receptors has been measured (EC(50)=1.8 uM). Compared with the agonist chloroquine (anti-malaria drug), it is 200-fold more potent. The peptide also causes an increase in cytosolic calcium in a specific subset of DRG neurons, and, in contrast to other Conus venom peptides, the peptide also affects a large fraction of the non-neuronal cells. In vivo, when intracranially injected into mice, it principally renders mice unable to move, and at very low doses, it causes hyperactivity. It also induces itch sensation, since intradermal cheek injection into humanized transgenic mouse (mouse MRGPRX1 replaced by human MRGPRX1) induces scratching. In vivo, when tested at high doses (10 uM) on zebrafish larvae, it induces a range of behavioral effects ranging from an early hypoactivity during the first hour of treatment to an increase in movement during the following hours when the larvae are submitted to strobe light phases. The protein is Conorfamide-Vc1 of Conus victoriae (Queen Victoria cone).